The chain runs to 152 residues: Endoribonuclease YbeY (152 aa).

3 residues coordinate Zn(2+): His-113, His-117, and His-123.

It belongs to the endoribonuclease YbeY family. It depends on Zn(2+) as a cofactor.

It localises to the cytoplasm. In terms of biological role, single strand-specific metallo-endoribonuclease involved in late-stage 70S ribosome quality control and in maturation of the 3' terminus of the 16S rRNA. The polypeptide is Endoribonuclease YbeY (Delftia acidovorans (strain DSM 14801 / SPH-1)).